We begin with the raw amino-acid sequence, 359 residues long: Protein Wnt-9b (359 aa).

The N-terminal stretch at methionine 1–alanine 23 is a signal peptide. Intrachain disulfides connect cysteine 91–cysteine 102, cysteine 137–cysteine 145, cysteine 147–cysteine 164, cysteine 212–cysteine 226, cysteine 214–cysteine 221, cysteine 293–cysteine 318, cysteine 307–cysteine 313, cysteine 317–cysteine 357, cysteine 333–cysteine 348, cysteine 335–cysteine 345, and cysteine 340–cysteine 341. A glycan (N-linked (GlcNAc...) asparagine) is linked at asparagine 101. Residue serine 218 is the site of O-palmitoleoyl serine; by PORCN attachment.

It belongs to the Wnt family. Forms a soluble 1:1 complex with AFM; this prevents oligomerization and is required for prolonged biological activity. The complex with AFM may represent the physiological form in body fluids. Component of the Wnt-Fzd-LRP5-LRP6 signaling complex that contains a WNT protein, a FZD protein and LRP5 or LRP6. Interacts directly in the complex with LRP6. Interacts with PKD1 (via extracellular domain). Post-translationally, palmitoleoylation is required for efficient binding to frizzled receptors. Depalmitoleoylation leads to Wnt signaling pathway inhibition.

It is found in the secreted. Its subcellular location is the extracellular space. The protein resides in the extracellular matrix. Ligand for members of the frizzled family of seven transmembrane receptors. Functions in the canonical Wnt/beta-catenin signaling pathway. Required for normal embryonic kidney development, and for normal development of the urogenital tract, including uterus and part of the oviduct and the upper vagina in females, and epididymis and vas deferens in males. Activates a signaling cascade in the metanephric mesenchyme that induces tubulogenesis. Acts upstream of WNT4 in the signaling pathways that mediate development of kidney tubules and the Muellerian ducts. Plays a role in cranofacial development and is required for normal fusion of the palate during embryonic development. This Mus musculus (Mouse) protein is Protein Wnt-9b (Wnt9b).